Reading from the N-terminus, the 56-residue chain is Ovomucoid (56 aa).

One can recognise a Kazal-like domain in the interval 6–56; it reads VDCSEYPKPACMSEYRPLCGSDNKTYVNKCNFCNAVVESNGTLTLSHFGKC. 3 disulfides stabilise this stretch: Cys8/Cys38, Cys16/Cys35, and Cys24/Cys56. N-linked (GlcNAc...) asparagine glycosylation occurs at Asn45.

It localises to the secreted. The sequence is that of Ovomucoid from Colinus virginianus (Northern bobwhite).